Here is a 197-residue protein sequence, read N- to C-terminus: Holliday junction branch migration complex subunit RuvA (197 aa).

The tract at residues 1 to 61 (MYEYFEGTIT…ENGMTLYGFK (61 aa)) is domain I. Residues 62-140 (SQQDKVLFNK…NYVAENLFTE (79 aa)) are domain II. The interval 141–150 (DEPVESVFPA) is flexible linker. The segment at 150 to 197 (ALEDALLALGALGYSQKEVDRIKPKLKKLPEMSADEYIKQGLGFLLKK) is domain III.

It belongs to the RuvA family. In terms of assembly, homotetramer. Forms an RuvA(8)-RuvB(12)-Holliday junction (HJ) complex. HJ DNA is sandwiched between 2 RuvA tetramers; dsDNA enters through RuvA and exits via RuvB. An RuvB hexamer assembles on each DNA strand where it exits the tetramer. Each RuvB hexamer is contacted by two RuvA subunits (via domain III) on 2 adjacent RuvB subunits; this complex drives branch migration. In the full resolvosome a probable DNA-RuvA(4)-RuvB(12)-RuvC(2) complex forms which resolves the HJ.

Its subcellular location is the cytoplasm. The RuvA-RuvB-RuvC complex processes Holliday junction (HJ) DNA during genetic recombination and DNA repair, while the RuvA-RuvB complex plays an important role in the rescue of blocked DNA replication forks via replication fork reversal (RFR). RuvA specifically binds to HJ cruciform DNA, conferring on it an open structure. The RuvB hexamer acts as an ATP-dependent pump, pulling dsDNA into and through the RuvAB complex. HJ branch migration allows RuvC to scan DNA until it finds its consensus sequence, where it cleaves and resolves the cruciform DNA. The sequence is that of Holliday junction branch migration complex subunit RuvA from Lactobacillus delbrueckii subsp. bulgaricus (strain ATCC BAA-365 / Lb-18).